A 70-amino-acid polypeptide reads, in one-letter code: MLVISRKKDEAVLIGDNIEVKVVGVDGNNIKLAISAPNNISILRKEIYEKVKNENIKATNKNIKILKSLK.

This sequence belongs to the CsrA/RsmA family. Homodimer; the beta-strands of each monomer intercalate to form a hydrophobic core, while the alpha-helices form wings that extend away from the core.

The protein resides in the cytoplasm. Functionally, a translational regulator that binds mRNA to regulate translation initiation and/or mRNA stability. Usually binds in the 5'-UTR at or near the Shine-Dalgarno sequence preventing ribosome-binding, thus repressing translation. Its main target seems to be the major flagellin gene, while its function is anatagonized by FliW. The polypeptide is Translational regulator CsrA (Clostridioides difficile (strain 630) (Peptoclostridium difficile)).